The chain runs to 123 residues: Fluoride-specific ion channel FluC 2 (123 aa).

The next 4 helical transmembrane spans lie at 3–23, 38–58, 62–82, and 94–114; these read LDGF…RMFI, ILIV…LNIT, LILF…SFIY, and LILL…FCLG. 2 residues coordinate Na(+): Gly-72 and Ser-75.

It belongs to the fluoride channel Fluc/FEX (TC 1.A.43) family.

The protein localises to the cell inner membrane. The enzyme catalyses fluoride(in) = fluoride(out). With respect to regulation, na(+) is not transported, but it plays an essential structural role and its presence is essential for fluoride channel function. Functionally, fluoride-specific ion channel. Important for reducing fluoride concentration in the cell, thus reducing its toxicity. The protein is Fluoride-specific ion channel FluC 2 of Prochlorococcus marinus subsp. pastoris (strain CCMP1986 / NIES-2087 / MED4).